A 239-amino-acid chain; its full sequence is Ribosomal RNA large subunit methyltransferase E (239 aa).

A disordered region spans residues 1–20; that stretch reads MTKAPIAGNRTGRKLGQRVK. A compositionally biased stretch (basic residues) spans 11-20; sequence TGRKLGQRVK. S-adenosyl-L-methionine is bound by residues glycine 81, tryptophan 83, aspartate 104, aspartate 120, and aspartate 144. Lysine 184 serves as the catalytic Proton acceptor.

This sequence belongs to the class I-like SAM-binding methyltransferase superfamily. RNA methyltransferase RlmE family.

Its subcellular location is the cytoplasm. The enzyme catalyses uridine(2552) in 23S rRNA + S-adenosyl-L-methionine = 2'-O-methyluridine(2552) in 23S rRNA + S-adenosyl-L-homocysteine + H(+). Functionally, specifically methylates the uridine in position 2552 of 23S rRNA at the 2'-O position of the ribose in the fully assembled 50S ribosomal subunit. This chain is Ribosomal RNA large subunit methyltransferase E, found in Rhizobium etli (strain ATCC 51251 / DSM 11541 / JCM 21823 / NBRC 15573 / CFN 42).